Reading from the N-terminus, the 37-residue chain is Large ribosomal subunit protein bL36c (37 aa).

This sequence belongs to the bacterial ribosomal protein bL36 family.

Its subcellular location is the plastid. It is found in the chloroplast. This Cucumis sativus (Cucumber) protein is Large ribosomal subunit protein bL36c.